The following is a 306-amino-acid chain: Putative syntaxin-131 (306 aa).

At Met1 the chain carries N-acetylmethionine. Residues 1–276 (MNDLLKGSLE…AVKSQKSSRK (276 aa)) lie on the Cytoplasmic side of the membrane. The segment covering 11–23 (FSRDRSNRSDIES) has biased composition (basic and acidic residues). A disordered region spans residues 11–35 (FSRDRSNRSDIESGHGPGNSGDLGL). Coiled coils occupy residues 35–72 (LSGF…VTKA) and 134–162 (KKKF…VERR). The t-SNARE coiled-coil homology domain maps to 205–267 (LAEIQERHDA…QSGNNQLTKA (63 aa)). Residues 277 to 297 (WMCIAILILLIIIIITVISVL) form a helical; Anchor for type IV membrane protein membrane-spanning segment. Residues 298 to 306 (KPWTQKNGA) lie on the Vesicular side of the membrane.

This sequence belongs to the syntaxin family. In terms of assembly, part of the t-SNARE complex.

It localises to the membrane. Its function is as follows. Vesicle trafficking protein that functions in the secretory pathway. This chain is Putative syntaxin-131 (SYP131), found in Arabidopsis thaliana (Mouse-ear cress).